The primary structure comprises 807 residues: Carbamoyltransferase HypF2 (807 aa).

The Acylphosphatase-like domain maps to 14–101 (RIRIRVRGVV…VDADGFAILE (88 aa)). 2 consecutive C4-type zinc fingers follow at residues 120–145 (CPDC…CTQC) and 170–195 (CRPC…CPDC). In terms of domain architecture, YrdC-like spans 212–415 (VDPIAETVAR…HVQFIRRARG (204 aa)). The disordered stretch occupies residues 663 to 682 (WGEQPSPGRPKTVAHSLGGV).

The protein belongs to the carbamoyltransferase HypF family.

The catalysed reaction is C-terminal L-cysteinyl-[HypE protein] + carbamoyl phosphate + ATP + H2O = C-terminal S-carboxamide-L-cysteinyl-[HypE protein] + AMP + phosphate + diphosphate + H(+). Its pathway is protein modification; [NiFe] hydrogenase maturation. In terms of biological role, involved in the maturation of [NiFe] hydrogenases. Along with HypE, it catalyzes the synthesis of the CN ligands of the active site iron of [NiFe]-hydrogenases. HypF functions as a carbamoyl transferase using carbamoylphosphate as a substrate and transferring the carboxamido moiety in an ATP-dependent reaction to the thiolate of the C-terminal cysteine of HypE yielding a protein-S-carboxamide. The sequence is that of Carbamoyltransferase HypF2 (hypF2) from Cupriavidus necator (strain ATCC 17699 / DSM 428 / KCTC 22496 / NCIMB 10442 / H16 / Stanier 337) (Ralstonia eutropha).